A 77-amino-acid polypeptide reads, in one-letter code: Large ribosomal subunit protein uL29 (77 aa).

It belongs to the universal ribosomal protein uL29 family.

This chain is Large ribosomal subunit protein uL29, found in Mycobacterium sp. (strain JLS).